The chain runs to 255 residues: Ribonuclease HII (255 aa).

Residues 70–255 (ELIAGVDEVG…FEPIKSIIKK (186 aa)) enclose the RNase H type-2 domain. A divalent metal cation is bound by residues aspartate 76, glutamate 77, and aspartate 168.

It belongs to the RNase HII family. Mn(2+) serves as cofactor. Requires Mg(2+) as cofactor.

It is found in the cytoplasm. It catalyses the reaction Endonucleolytic cleavage to 5'-phosphomonoester.. In terms of biological role, endonuclease that specifically degrades the RNA of RNA-DNA hybrids. This chain is Ribonuclease HII, found in Streptococcus thermophilus (strain ATCC BAA-491 / LMD-9).